We begin with the raw amino-acid sequence, 568 residues long: Dihydroxy-acid dehydratase 1 (568 aa).

Residues 1 to 22 form a disordered region; the sequence is MAEQTNTPDLKPRSRDVTDGLE. The span at 10–22 shows a compositional bias: basic and acidic residues; sequence LKPRSRDVTDGLE. Cysteine 57 contributes to the [2Fe-2S] cluster binding site. Aspartate 89 contacts Mg(2+). Cysteine 130 contacts [2Fe-2S] cluster. Mg(2+)-binding residues include aspartate 131 and lysine 132. An N6-carboxylysine modification is found at lysine 132. A [2Fe-2S] cluster-binding site is contributed by cysteine 207. Position 458 (glutamate 458) interacts with Mg(2+). Serine 484 functions as the Proton acceptor in the catalytic mechanism.

Belongs to the IlvD/Edd family. In terms of assembly, homodimer. Requires [2Fe-2S] cluster as cofactor. It depends on Mg(2+) as a cofactor.

It carries out the reaction (2R)-2,3-dihydroxy-3-methylbutanoate = 3-methyl-2-oxobutanoate + H2O. The catalysed reaction is (2R,3R)-2,3-dihydroxy-3-methylpentanoate = (S)-3-methyl-2-oxopentanoate + H2O. It participates in amino-acid biosynthesis; L-isoleucine biosynthesis; L-isoleucine from 2-oxobutanoate: step 3/4. Its pathway is amino-acid biosynthesis; L-valine biosynthesis; L-valine from pyruvate: step 3/4. In terms of biological role, functions in the biosynthesis of branched-chain amino acids. Catalyzes the dehydration of (2R,3R)-2,3-dihydroxy-3-methylpentanoate (2,3-dihydroxy-3-methylvalerate) into 2-oxo-3-methylpentanoate (2-oxo-3-methylvalerate) and of (2R)-2,3-dihydroxy-3-methylbutanoate (2,3-dihydroxyisovalerate) into 2-oxo-3-methylbutanoate (2-oxoisovalerate), the penultimate precursor to L-isoleucine and L-valine, respectively. The protein is Dihydroxy-acid dehydratase 1 of Nocardia farcinica (strain IFM 10152).